Consider the following 164-residue polypeptide: MAEFSGEPRGEGRRIVVVASRFNEGVTVPLAEGAVSALVGKGVAFDNIDVLWVPGAWELPVAVRRALSSERYDAAVAVGAVIRGDTPHFDIVAGETARGLMEASRDFDVPVTLGLLTTDTLEQAEARAGGVHGNKGADAALAALEVLDLFDRALPANDYDEDGE.

5-amino-6-(D-ribitylamino)uracil is bound by residues F22, 56-58 (AWE), and 80-82 (AVI). Residue 85-86 (DT) coordinates (2S)-2-hydroxy-3-oxobutyl phosphate. H88 acts as the Proton donor in catalysis. L113 provides a ligand contact to 5-amino-6-(D-ribitylamino)uracil. R127 is a (2S)-2-hydroxy-3-oxobutyl phosphate binding site.

It belongs to the DMRL synthase family.

The catalysed reaction is (2S)-2-hydroxy-3-oxobutyl phosphate + 5-amino-6-(D-ribitylamino)uracil = 6,7-dimethyl-8-(1-D-ribityl)lumazine + phosphate + 2 H2O + H(+). It functions in the pathway cofactor biosynthesis; riboflavin biosynthesis; riboflavin from 2-hydroxy-3-oxobutyl phosphate and 5-amino-6-(D-ribitylamino)uracil: step 1/2. Its function is as follows. Catalyzes the formation of 6,7-dimethyl-8-ribityllumazine by condensation of 5-amino-6-(D-ribitylamino)uracil with 3,4-dihydroxy-2-butanone 4-phosphate. This is the penultimate step in the biosynthesis of riboflavin. The sequence is that of 6,7-dimethyl-8-ribityllumazine synthase from Gemmatimonas aurantiaca (strain DSM 14586 / JCM 11422 / NBRC 100505 / T-27).